Consider the following 776-residue polypeptide: GATOR2 complex protein Wdr24 (776 aa).

WD repeat units lie at residues 63–103 (NLSY…RQKQ), 109–149 (EHER…SINT), 152–192 (CNSE…KCMV), 196–235 (AHYG…GLEH), 238–280 (HTIA…IPFA), and 284–326 (EHTN…ALKA). Residues 466-490 (HRSSFSNQKNPMNSRRATQVASDWP) form a disordered region. The span at 469–490 (SFSNQKNPMNSRRATQVASDWP) shows a compositional bias: polar residues. The C4-type zinc-finger motif lies at 703-726 (NCGECGRPMGGKVGWYCDKCKSMQ). Zn(2+) is bound by residues cysteine 704, cysteine 707, cysteine 719, cysteine 722, cysteine 730, cysteine 733, cysteine 744, cysteine 747, histidine 749, histidine 752, histidine 755, cysteine 766, cysteine 769, histidine 771, and cysteine 773. The segment at 728–776 (AKCCVCGLIVRGVYAWCQGCSHGGHIEHLQKYFAKHSKCPKCGHLCAYS) adopts an RING-type; atypical zinc-finger fold.

Belongs to the WD repeat WDR24 family. Component of the GATOR complex consisting of mio, Nup44A/Seh1, Im11, Nplr3, Nplr2, Wdr24, Wdr59 and Sec13. Within the GATOR complex, probable component of the GATOR2 subcomplex which is likely composed of mio, Nup44A/Seh1, Wdr24, Wdr59 and Sec13. Interacts with Nup44A/Seh1. Interacts with mio. Interacts with Nplr3. The GATOR2 complex associates with unmet in the absence of S-adenosyl-L-methionine; the mio-Wdr24-Nup44A subcomplex is essential and sufficient for this interaction while Wdr59 and Sec13 are dispensable. This association acts as a nutrient sensor to inhibit mTORC1 signaling in the absence of methionine.

It localises to the lysosome. It is found in the cytoplasmic vesicle. Its subcellular location is the autophagosome. It carries out the reaction S-ubiquitinyl-[E2 ubiquitin-conjugating enzyme]-L-cysteine + [acceptor protein]-L-lysine = [E2 ubiquitin-conjugating enzyme]-L-cysteine + N(6)-ubiquitinyl-[acceptor protein]-L-lysine.. It functions in the pathway protein modification; protein ubiquitination. Functionally, an essential component of the GATOR subcomplex GATOR2 which functions as an activator of the amino acid-sensing branch of the mTORC1 signaling pathway. The two GATOR subcomplexes, GATOR1 and GATOR2, regulate the mTORC1 pathway in order to mediate metabolic homeostasis, female gametogenesis and the response to amino acid limitation and complete starvation. GATOR2 activates the mTORC1 signaling pathway through the inhibition of the GATOR1 subcomplex, controlling the switch to cell proliferation and growth under nutrient replete conditions and during female oocyte development. GATOR2 probably acts as an E3 ubiquitin-protein ligase toward GATOR1. In the presence of abundant amino acids, the GATOR2 complex mediates ubiquitination of components of the GATOR1 complex, leading to GATOR1 inactivation. This GATOR2 component is required for activating mTORC1 and promoting cell growth in both germline and somatic cells. In addition to its role in regulation of the mTORC1 complex, functions independently of mTORC1 to promote the acidification of lysosomes and facilitates autophagic flux. This Drosophila melanogaster (Fruit fly) protein is GATOR2 complex protein Wdr24.